Consider the following 137-residue polypeptide: 14 kDa proline-rich protein DC2.15 (137 aa).

Positions 1–25 are cleaved as a signal peptide; sequence MGSKNSASVALFFTLNILFFALVSS. The tract at residues 30–53 is disordered; that stretch reads PDPYKPKPKPTPKPTPTPYPSAGK. Pro residues predominate over residues 38 to 48; that stretch reads KPTPKPTPTPY. The helical transmembrane segment at 88-104 threads the bilayer; the sequence is LEGLVNLEAAVCLCTAI.

Its subcellular location is the membrane. In terms of biological role, may be connected with the initiation of embryogenesis or with the metabolic changes produced by the removal of auxins. This chain is 14 kDa proline-rich protein DC2.15, found in Daucus carota (Wild carrot).